Consider the following 1091-residue polypeptide: Error-prone DNA polymerase (1091 aa).

Residues 1-51 (MGWSNGPPSWAEMERVLNGKPRHAGVPAFDADGDVPRSRKRGAYQPPGRER) form a disordered region.

The protein belongs to the DNA polymerase type-C family. DnaE2 subfamily.

It is found in the cytoplasm. The enzyme catalyses DNA(n) + a 2'-deoxyribonucleoside 5'-triphosphate = DNA(n+1) + diphosphate. Its function is as follows. DNA polymerase involved in damage-induced mutagenesis and translesion synthesis (TLS). It is not the major replicative DNA polymerase. In Mycobacterium bovis (strain ATCC BAA-935 / AF2122/97), this protein is Error-prone DNA polymerase.